A 48-amino-acid chain; its full sequence is DNA-directed RNA polymerase subunit Rpo12 (48 aa).

Positions 9, 26, and 29 each coordinate Zn(2+).

This sequence belongs to the archaeal Rpo12/eukaryotic RPC10 RNA polymerase subunit family. Part of the RNA polymerase complex. Zn(2+) is required as a cofactor.

The protein localises to the cytoplasm. The catalysed reaction is RNA(n) + a ribonucleoside 5'-triphosphate = RNA(n+1) + diphosphate. In terms of biological role, DNA-dependent RNA polymerase (RNAP) catalyzes the transcription of DNA into RNA using the four ribonucleoside triphosphates as substrates. This chain is DNA-directed RNA polymerase subunit Rpo12, found in Sulfurisphaera tokodaii (strain DSM 16993 / JCM 10545 / NBRC 100140 / 7) (Sulfolobus tokodaii).